The sequence spans 318 residues: S-adenosylmethionine/S-adenosylhomocysteine transporter (318 aa).

A run of 10 helical transmembrane segments spans residues 7–27 (FANL…AFIW), 44–64 (LFVT…LLLF), 76–96 (VMPI…LEFI), 105–125 (KACF…YVQL), 134–154 (LGGL…GGGE), 163–183 (LGMP…GWTL), 193–213 (SLSI…LSLA), 231–251 (LFLQ…YNLF), 262–282 (FLSF…WLLL), and 285–305 (SFPP…RLIY). One can recognise an EamA 1 domain in the interval 25–148 (FIWSSSFALS…LGLVSYLVYL (124 aa)). The EamA 2 domain occupies 191–304 (CESLSITAIN…GFMVLGCRLI (114 aa)).

It belongs to the drug/metabolite transporter (DMT) superfamily. 10 TMS drug/metabolite exporter (DME) (TC 2.A.7.3) family.

It is found in the cell membrane. Transports S-adenosylmethionine (SAM) and S-adenosylhomocysteine (SAH). Allows bacteria to acquire SAM from the eukaryotic host cell and to likely remove the toxic by-product SAH. This Chlamydia muridarum (strain MoPn / Nigg) protein is S-adenosylmethionine/S-adenosylhomocysteine transporter.